Consider the following 84-residue polypeptide: Large ribosomal subunit protein bL27 (84 aa).

Positions 1–22 (MAHKKAGGSTRNGRDSESKRLG) are disordered.

This sequence belongs to the bacterial ribosomal protein bL27 family.

The protein is Large ribosomal subunit protein bL27 of Shewanella amazonensis (strain ATCC BAA-1098 / SB2B).